The sequence spans 152 residues: 3-dehydroquinate dehydratase (152 aa).

The active-site Proton acceptor is the Y25. The substrate site is built by N76, H82, and D89. H102 (proton donor) is an active-site residue. Substrate is bound by residues 103–104 (LS) and R113.

It belongs to the type-II 3-dehydroquinase family. Homododecamer.

The catalysed reaction is 3-dehydroquinate = 3-dehydroshikimate + H2O. Its pathway is metabolic intermediate biosynthesis; chorismate biosynthesis; chorismate from D-erythrose 4-phosphate and phosphoenolpyruvate: step 3/7. In terms of biological role, catalyzes a trans-dehydration via an enolate intermediate. The protein is 3-dehydroquinate dehydratase of Gloeothece citriformis (strain PCC 7424) (Cyanothece sp. (strain PCC 7424)).